Here is a 292-residue protein sequence, read N- to C-terminus: Probable alpha-L-glutamate ligase (292 aa).

Positions 104–287 constitute an ATP-grasp domain; that stretch reads HQLLAAKGID…VATRIIEHVE (184 aa). ATP contacts are provided by residues K141, 178-179, D187, and 211-213; these read EF and RSN. D248, E260, and N262 together coordinate Mg(2+). Residues D248, E260, and N262 each contribute to the Mn(2+) site.

The protein belongs to the RimK family. It depends on Mg(2+) as a cofactor. Mn(2+) is required as a cofactor.

This is Probable alpha-L-glutamate ligase from Stenotrophomonas maltophilia (strain K279a).